A 396-amino-acid chain; its full sequence is Putative peptide chain release factor 1, mitochondrial (396 aa).

Glutamine 270 is subject to N5-methylglutamine.

It belongs to the prokaryotic/mitochondrial release factor family. Post-translationally, methylation of glutamine in the GGQ triplet is conserved from bacteria to mammals.

Its subcellular location is the mitochondrion. The protein is Putative peptide chain release factor 1, mitochondrial of Schizosaccharomyces pombe (strain 972 / ATCC 24843) (Fission yeast).